Reading from the N-terminus, the 312-residue chain is Mycothiol acetyltransferase (312 aa).

2 consecutive N-acetyltransferase domains span residues 8–136 (PIIR…LPMP) and 149–301 (LRLD…HQDH). Glu-38 is a binding site for 1D-myo-inositol 2-(L-cysteinylamino)-2-deoxy-alpha-D-glucopyranoside. Residues 77–79 (LMV) and 85–90 (RQGIAT) each bind acetyl-CoA. 1D-myo-inositol 2-(L-cysteinylamino)-2-deoxy-alpha-D-glucopyranoside-binding residues include Glu-175, Lys-215, and Glu-226. Residues 230 to 232 (LGV) and 237 to 243 (EGKGVGR) each bind acetyl-CoA. Tyr-264 is a 1D-myo-inositol 2-(L-cysteinylamino)-2-deoxy-alpha-D-glucopyranoside binding site. 269–274 (NERVVH) lines the acetyl-CoA pocket. A disordered region spans residues 292–312 (PAKPARHQDHGRQSSPQERDA). Residues 297-312 (RHQDHGRQSSPQERDA) show a composition bias toward basic and acidic residues.

This sequence belongs to the acetyltransferase family. MshD subfamily. As to quaternary structure, monomer.

It catalyses the reaction 1D-myo-inositol 2-(L-cysteinylamino)-2-deoxy-alpha-D-glucopyranoside + acetyl-CoA = mycothiol + CoA + H(+). Functionally, catalyzes the transfer of acetyl from acetyl-CoA to desacetylmycothiol (Cys-GlcN-Ins) to form mycothiol. In Propionibacterium freudenreichii subsp. shermanii (strain ATCC 9614 / DSM 4902 / CIP 103027 / NCIMB 8099 / CIRM-BIA1), this protein is Mycothiol acetyltransferase.